Consider the following 545-residue polypeptide: Chaperonin GroEL (545 aa).

Residues 30 to 33, Lys51, 87 to 91, Gly415, and Asp495 contribute to the ATP site; these read TLGP and DGTTT.

The protein belongs to the chaperonin (HSP60) family. Forms a cylinder of 14 subunits composed of two heptameric rings stacked back-to-back. Interacts with the co-chaperonin GroES.

The protein localises to the cytoplasm. It carries out the reaction ATP + H2O + a folded polypeptide = ADP + phosphate + an unfolded polypeptide.. Its function is as follows. Together with its co-chaperonin GroES, plays an essential role in assisting protein folding. The GroEL-GroES system forms a nano-cage that allows encapsulation of the non-native substrate proteins and provides a physical environment optimized to promote and accelerate protein folding. The polypeptide is Chaperonin GroEL (Shewanella amazonensis (strain ATCC BAA-1098 / SB2B)).